A 408-amino-acid chain; its full sequence is tRNA-specific 2-thiouridylase MnmA (408 aa).

ATP-binding positions include 27–34 (AMSGGVDS) and Leu-53. Catalysis depends on Cys-121, which acts as the Nucleophile. A disulfide bridge connects residues Cys-121 and Cys-222. Gly-145 lines the ATP pocket. The tract at residues 172 to 174 (RDQ) is interaction with tRNA. Residue Cys-222 is the Cysteine persulfide intermediate of the active site.

This sequence belongs to the MnmA/TRMU family.

It localises to the cytoplasm. The enzyme catalyses S-sulfanyl-L-cysteinyl-[protein] + uridine(34) in tRNA + AH2 + ATP = 2-thiouridine(34) in tRNA + L-cysteinyl-[protein] + A + AMP + diphosphate + H(+). Its function is as follows. Catalyzes the 2-thiolation of uridine at the wobble position (U34) of tRNA, leading to the formation of s(2)U34. The sequence is that of tRNA-specific 2-thiouridylase MnmA from Rhizobium etli (strain CIAT 652).